The following is a 321-amino-acid chain: Gap junction delta-2 protein (321 aa).

Residues 1–19 are Cytoplasmic-facing; the sequence is MGEWTILERLLEAAVQQHS. The chain crosses the membrane as a helical span at residues 20 to 42; sequence TMIGRILLTVVVIFRILIVAIVG. Residues 43–75 lie on the Extracellular side of the membrane; the sequence is ETVYDDEQTMFVCNTLQPGCNQACYDRAFPISH. The helical transmembrane segment at 76-98 threads the bilayer; it reads IRYWVFQIIMVCTPSLCFITYSV. Residues 99–197 lie on the Cytoplasmic side of the membrane; the sequence is HQSAKQRERR…KLRRQEGISR (99 aa). Residues 120-141 are disordered; sequence PAESIGGPGGTGGGGSGGSKRE. The segment covering 125-137 has biased composition (gly residues); the sequence is GGPGGTGGGGSGG. Residues 198-220 traverse the membrane as a helical segment; it reads FYIIQVVFRNALEIGFLVGQYFL. Topologically, residues 221 to 252 are extracellular; that stretch reads YGFSVPGLYECNRYPCIKEVECYVSRPTEKTV. Residues 253-275 traverse the membrane as a helical segment; sequence FLVFMFAVSGICVVLNLAELNHL. Topologically, residues 276 to 321 are cytoplasmic; sequence GWRKIKLAVRGAQAKRKSVYEIRNKDLPRVSVPNFGRTQSSDSAYV.

This sequence belongs to the connexin family. Delta-type subfamily. A connexon is composed of a hexamer of connexins. As to expression, highly expressed in neurons.

It localises to the cell membrane. The protein resides in the cell junction. The protein localises to the gap junction. Its function is as follows. One gap junction consists of a cluster of closely packed pairs of transmembrane channels, the connexons, through which materials of low MW diffuse from one cell to a neighboring cell. This is Gap junction delta-2 protein (Gjd2) from Mus musculus (Mouse).